We begin with the raw amino-acid sequence, 470 residues long: tRNA (guanine(37)-N(1))-methyltransferase (470 aa).

Residues 304-305 (DL), 332-333 (DG), and Asn-370 each bind S-adenosyl-L-methionine.

Belongs to the class I-like SAM-binding methyltransferase superfamily. TRM5/TYW2 family. As to quaternary structure, monomer.

It is found in the mitochondrion matrix. The protein localises to the nucleus. It localises to the cytoplasm. The catalysed reaction is guanosine(37) in tRNA + S-adenosyl-L-methionine = N(1)-methylguanosine(37) in tRNA + S-adenosyl-L-homocysteine + H(+). Functionally, specifically methylates the N1 position of guanosine-37 in various cytoplasmic and mitochondrial tRNAs. Methylation is not dependent on the nature of the nucleoside 5' of the target nucleoside. This is the first step in the biosynthesis of wybutosine (yW), a modified base adjacent to the anticodon of tRNAs and required for accurate decoding. In Theileria parva (East coast fever infection agent), this protein is tRNA (guanine(37)-N(1))-methyltransferase.